The chain runs to 147 residues: Hemoglobin subunit gamma-2 (147 aa).

A Globin domain is found at 3–147 (HFTEEDKATI…VASALSSRYH (145 aa)). A Phosphothreonine modification is found at Thr13. 3 positions are modified to phosphoserine: Ser45, Ser51, and Ser53. Lys60 is subject to N6-acetyllysine. His64 contributes to the heme b binding site. Lys83 carries the post-translational modification N6-acetyllysine. His93 is a heme b binding site. Position 94 is an S-nitrosocysteine (Cys94). Residues Ser140, Ser143, and Ser144 each carry the phosphoserine modification.

Belongs to the globin family. As to quaternary structure, heterotetramer of two alpha chains and two gamma chains in fetal hemoglobin (Hb F). In terms of tissue distribution, red blood cells.

Functionally, gamma chains make up the fetal hemoglobin F, in combination with alpha chains. The sequence is that of Hemoglobin subunit gamma-2 (HBG2) from Pongo pygmaeus (Bornean orangutan).